The following is a 359-amino-acid chain: Mannose-1-phosphate guanylyltransferase catalytic subunit beta (359 aa).

The interval 2-221 is substrate-binding domain; the sequence is KALILVGGFG…EGFWMDVGQP (220 aa). GDP-alpha-D-mannose is bound at residue aspartate 109. Aspartate 109 contributes to the Mg(2+) binding site. The active site involves lysine 161. Aspartate 217 contacts GDP-alpha-D-mannose. Aspartate 217 lines the Mg(2+) pocket. The interval 244–359 is hexapeptide repeat domain; that stretch reads ATGNGIIGPV…SSIPEPEIIM (116 aa).

The protein belongs to the transferase hexapeptide repeat family. As to quaternary structure, component of the GMPPA-GMPPB mannose-1-phosphate guanylyltransferase complex composed of 4 GMPPA subunits and 8 gmppB subunits; the complex is organized into three layers, a central layer made up of 2 gmppA dimers sandwiched between two layers each made up of 2 gmppB dimers. gmppB catalytic activity is reduced when part of the complex and binding of GDP-alpha-D-Mannose by gmppA induces allosteric feedback inhibition of gmppB. Mg(2+) is required as a cofactor.

The enzyme catalyses alpha-D-mannose 1-phosphate + GTP + H(+) = GDP-alpha-D-mannose + diphosphate. It functions in the pathway nucleotide-sugar biosynthesis; GDP-alpha-D-mannose biosynthesis; GDP-alpha-D-mannose from alpha-D-mannose 1-phosphate (GTP route): step 1/1. Its activity is regulated as follows. Enzyme activity is reduced by incorporation into the GMPPA-GMPPB mannose-1-phosphate guanylyltransferase complex. Allosterically inhibited, when part of the GMPPA-GMPPB complex, by GDP-alpha-D-mannose binding to GMPPA. Its function is as follows. Catalytic subunit of the GMPPA-GMPPB mannose-1-phosphate guanylyltransferase complex. Catalyzes the formation of GDP-mannose, an essential precursor of glycan moieties of glycoproteins and glycolipids. Can catalyze the reverse reaction in vitro. Together with GMPPA regulates GDP-alpha-D-mannose levels. This is Mannose-1-phosphate guanylyltransferase catalytic subunit beta (gmppB) from Dictyostelium discoideum (Social amoeba).